Consider the following 416-residue polypeptide: UPF0761 membrane protein Rfer_2991 (416 aa).

Transmembrane regions (helical) follow at residues 60–80 (MALVPLVTVALAIFTAFPMFA), 117–137 (LGGAGIALLLVTAVALILTID), 156–176 (VLVYWAALTLGPLVLGVSLSI), 187–207 (VVGVMPGGVQFLLDVLQFFMV), 222–242 (WVKWSHAWAGGMFVSAGLELA), and 268–288 (ILLIWIYVAWIIVLLGAVIAA).

The protein belongs to the UPF0761 family.

It localises to the cell inner membrane. The sequence is that of UPF0761 membrane protein Rfer_2991 from Albidiferax ferrireducens (strain ATCC BAA-621 / DSM 15236 / T118) (Rhodoferax ferrireducens).